A 231-amino-acid polypeptide reads, in one-letter code: Probable septum site-determining protein MinC (231 aa).

The segment at 101 to 125 (GKEKAPRPAPTPQAPAQNTTPVTKT) is disordered. The span at 114–123 (APAQNTTPVT) shows a compositional bias: low complexity.

Belongs to the MinC family. In terms of assembly, interacts with MinD and FtsZ.

Its function is as follows. Cell division inhibitor that blocks the formation of polar Z ring septums. Rapidly oscillates between the poles of the cell to destabilize FtsZ filaments that have formed before they mature into polar Z rings. Prevents FtsZ polymerization. This chain is Probable septum site-determining protein MinC, found in Escherichia coli (strain ATCC 8739 / DSM 1576 / NBRC 3972 / NCIMB 8545 / WDCM 00012 / Crooks).